The primary structure comprises 271 residues: Thiosulfate sulfurtransferase (271 aa).

2 Rhodanese domains span residues 21–129 (SAPE…PLSR) and 159–270 (GAAD…TPVE). Cys230 serves as the catalytic Cysteine persulfide intermediate. Residue Arg235 coordinates substrate.

It localises to the cytoplasm. The enzyme catalyses thiosulfate + hydrogen cyanide = thiocyanate + sulfite + 2 H(+). This is Thiosulfate sulfurtransferase (rhdA) from Azotobacter vinelandii.